A 229-amino-acid chain; its full sequence is Phosphatidylinositol N-acetylglucosaminyltransferase subunit GPI15 (229 aa).

Helical transmembrane passes span 59–79 (IQYH…VICL) and 101–121 (ILII…GPSV).

It belongs to the PIGH family. In terms of assembly, component of the phosphatidylinositol N-acetylglucosaminyltransferase (GPI-GlcNAc transferase) complex composed of at least GPI1, GPI2, GPI3, GPI15, GPI19 and ERI1.

The protein resides in the membrane. The enzyme catalyses a 1,2-diacyl-sn-glycero-3-phospho-(1D-myo-inositol) + UDP-N-acetyl-alpha-D-glucosamine = a 6-(N-acetyl-alpha-D-glucosaminyl)-1-(1,2-diacyl-sn-glycero-3-phospho)-1D-myo-inositol + UDP + H(+). It functions in the pathway glycolipid biosynthesis; glycosylphosphatidylinositol-anchor biosynthesis. In terms of biological role, part of the complex catalyzing the transfer of N-acetylglucosamine from UDP-N-acetylglucosamine to phosphatidylinositol, the first step of GPI biosynthesis. The chain is Phosphatidylinositol N-acetylglucosaminyltransferase subunit GPI15 (GPI15) from Saccharomyces cerevisiae (strain ATCC 204508 / S288c) (Baker's yeast).